Reading from the N-terminus, the 206-residue chain is Putative 3-methyladenine DNA glycosylase (206 aa).

The protein belongs to the DNA glycosylase MPG family.

In Salinibacter ruber (strain DSM 13855 / M31), this protein is Putative 3-methyladenine DNA glycosylase.